We begin with the raw amino-acid sequence, 540 residues long: Membrane protein insertase YidC (540 aa).

The chain crosses the membrane as a helical span at residues 6 to 26 (NILLIALALVSFLLFQQWQVA). Positions 36–63 (QAQSSSTLPAPSFADELDPVPGQQQASA) are disordered. The next 4 helical transmembrane spans lie at 342-362 (AFIQSFVGNWGVAIICLTFIV), 417-437 (LGGCLPLILQMPIFIALYWAL), 455-475 (LSAQDPYYILPLLMGASMFLI), and 496-516 (PVMFTFFFLFFPSGLVLYWLV).

Belongs to the OXA1/ALB3/YidC family. Type 1 subfamily. As to quaternary structure, interacts with the Sec translocase complex via SecD. Specifically interacts with transmembrane segments of nascent integral membrane proteins during membrane integration.

The protein resides in the cell inner membrane. Required for the insertion and/or proper folding and/or complex formation of integral membrane proteins into the membrane. Involved in integration of membrane proteins that insert both dependently and independently of the Sec translocase complex, as well as at least some lipoproteins. Aids folding of multispanning membrane proteins. This chain is Membrane protein insertase YidC, found in Vibrio campbellii (strain ATCC BAA-1116).